The primary structure comprises 283 residues: Polyamine aminopropyltransferase (283 aa).

In terms of domain architecture, PABS spans 5 to 240 (NTWFTEIHQD…GWWTATMACK (236 aa)). Position 33 (glutamine 33) interacts with S-methyl-5'-thioadenosine. Residues histidine 64 and aspartate 88 each coordinate spermidine. Residues aspartate 108 and 139 to 140 (DG) contribute to the S-methyl-5'-thioadenosine site. Aspartate 158 serves as the catalytic Proton acceptor. 158-161 (DSTD) provides a ligand contact to spermidine. An S-methyl-5'-thioadenosine-binding site is contributed by proline 165.

It belongs to the spermidine/spermine synthase family. In terms of assembly, homodimer or homotetramer.

It localises to the cytoplasm. The enzyme catalyses S-adenosyl 3-(methylsulfanyl)propylamine + putrescine = S-methyl-5'-thioadenosine + spermidine + H(+). It functions in the pathway amine and polyamine biosynthesis; spermidine biosynthesis; spermidine from putrescine: step 1/1. Its function is as follows. Catalyzes the irreversible transfer of a propylamine group from the amino donor S-adenosylmethioninamine (decarboxy-AdoMet) to putrescine (1,4-diaminobutane) to yield spermidine. The chain is Polyamine aminopropyltransferase from Thioalkalivibrio sulfidiphilus (strain HL-EbGR7).